A 131-amino-acid polypeptide reads, in one-letter code: ATP synthase epsilon chain (131 aa).

The protein belongs to the ATPase epsilon chain family. As to quaternary structure, F-type ATPases have 2 components, CF(1) - the catalytic core - and CF(0) - the membrane proton channel. CF(1) has five subunits: alpha(3), beta(3), gamma(1), delta(1), epsilon(1). CF(0) has three main subunits: a, b and c.

The protein resides in the cell membrane. Its function is as follows. Produces ATP from ADP in the presence of a proton gradient across the membrane. The polypeptide is ATP synthase epsilon chain (Clostridium novyi (strain NT)).